A 1371-amino-acid polypeptide reads, in one-letter code: DNA-directed RNA polymerase subunit beta (1371 aa).

Belongs to the RNA polymerase beta chain family. In terms of assembly, the RNAP catalytic core consists of 2 alpha, 1 beta, 1 beta' and 1 omega subunit. When a sigma factor is associated with the core the holoenzyme is formed, which can initiate transcription.

It carries out the reaction RNA(n) + a ribonucleoside 5'-triphosphate = RNA(n+1) + diphosphate. DNA-dependent RNA polymerase catalyzes the transcription of DNA into RNA using the four ribonucleoside triphosphates as substrates. The polypeptide is DNA-directed RNA polymerase subunit beta (Geobacter sp. (strain M21)).